A 626-amino-acid polypeptide reads, in one-letter code: Glycosyltransferase 25 family member (626 aa).

The first 21 residues, 1 to 21 (MLKKQVFYGILLICAFVCIYG), serve as a signal peptide directing secretion. 4 N-linked (GlcNAc...) asparagine glycosylation sites follow: Asn-113, Asn-234, Asn-272, and Asn-533. Residues 623–626 (HQEL) carry the Prevents secretion from ER motif.

It belongs to the glycosyltransferase 25 family.

The protein localises to the endoplasmic reticulum lumen. In Drosophila pseudoobscura pseudoobscura (Fruit fly), this protein is Glycosyltransferase 25 family member.